Consider the following 544-residue polypeptide: Chaperonin GroEL (544 aa).

Residues 29–32 (TLGP), 86–90 (DGTTT), Gly413, 476–478 (NAA), and Asp492 each bind ATP.

Belongs to the chaperonin (HSP60) family. In terms of assembly, forms a cylinder of 14 subunits composed of two heptameric rings stacked back-to-back. Interacts with the co-chaperonin GroES.

It is found in the cytoplasm. The protein localises to the secreted. The enzyme catalyses ATP + H2O + a folded polypeptide = ADP + phosphate + an unfolded polypeptide.. In terms of biological role, together with its co-chaperonin GroES, plays an essential role in assisting protein folding. The GroEL-GroES system forms a nano-cage that allows encapsulation of the non-native substrate proteins and provides a physical environment optimized to promote and accelerate protein folding. The chain is Chaperonin GroEL from Bacillus subtilis (strain 168).